A 578-amino-acid chain; its full sequence is Arginine--tRNA ligase (578 aa).

A 'HIGH' region motif is present at residues 127-137 (PNLAKEMHVGH).

Belongs to the class-I aminoacyl-tRNA synthetase family. In terms of assembly, monomer.

It localises to the cytoplasm. It catalyses the reaction tRNA(Arg) + L-arginine + ATP = L-arginyl-tRNA(Arg) + AMP + diphosphate. This chain is Arginine--tRNA ligase, found in Pseudomonas fluorescens (strain Pf0-1).